The chain runs to 2623 residues: Immunoglobulin superfamily member 10 (2623 aa).

The first 28 residues, 1 to 28, serve as a signal peptide directing secretion; that stretch reads MKVKGRGITCLLVSFAVICLVATPGGKA. One can recognise an LRRNT domain in the interval 29-56; it reads CPRRCACYMPTEVHCTFRYLTSIPDSIP. LRR repeat units lie at residues 58 to 79, 82 to 103, 106 to 127, 130 to 151, 154 to 175, and 186 to 207; these read NVER…DFSG, KLEL…TFSD, ALQV…TFYG, SLTR…VFYG, FLRL…TFVS, and FIKF…MVSY. In terms of domain architecture, LRRCT spans 219–281; the sequence is NPWTCDCHLK…VSAAAFQCAK (63 aa). N-linked (GlcNAc...) asparagine glycans are attached at residues N319 and N439. Ig-like C2-type domains lie at 461 to 567 and 571 to 661; these read PRAE…YRIT and PLVE…FQVS. 2 disulfides stabilise this stretch: C497-C551 and C595-C645. N-linked (GlcNAc...) asparagine glycosylation occurs at N627. Disordered regions lie at residues 668 to 692 and 767 to 788; these read RPLE…HLKE and AMPD…QLPN. N-linked (GlcNAc...) asparagine glycosylation is found at N774 and N999. Disordered stretches follow at residues 1334 to 1376 and 1434 to 1453; these read TQTE…AMTP and STIA…TTTR. Residues 1335-1356 are compositionally biased toward basic and acidic residues; the sequence is QTERSRAQTIQREQEPQKKNRT. The segment covering 1357 to 1373 has biased composition (polar residues); sequence DPNISPDQSSGFTTPTA. Ig-like C2-type domains lie at 1648–1739, 1745–1836, 1841–1933, 1941–2034, 2037–2135, 2141–2229, 2234–2331, 2337–2427, 2432–2518, and 2528–2623; these read PRIV…VTLS, PRIL…VKIQ, PPVI…VMLT, PRIE…VSLR, PAKI…VHLT, PRIR…YKLD, PPLI…LEVL, PTFR…VILE, PVIL…TLIT, and PRIT…IQVI. 3 disulfides stabilise this stretch: C1670-C1723, C1767-C1820, and C1864-C1917. N-linked (GlcNAc...) asparagine glycans are attached at residues N1899 and N1962. 7 disulfide bridges follow: C1963–C2016, C2060–C2119, C2163–C2213, C2261–C2313, C2359–C2411, C2454–C2506, and C2550–C2605. N-linked (GlcNAc...) asparagine glycosylation is present at N2101. Y2603 carries the post-translational modification Phosphotyrosine.

The protein resides in the secreted. In terms of biological role, involved in the control of early migration of neurons expressing gonadotropin-releasing hormone (GNRH neurons). May be involved in the maintenance of osteochondroprogenitor cells pool. The protein is Immunoglobulin superfamily member 10 (IGSF10) of Homo sapiens (Human).